The following is a 314-amino-acid chain: uncharacterized protein (314 aa).

A compositionally biased stretch (basic and acidic residues) spans 68–91; that stretch reads EKKKKSSSFEKRDKRRVQLKEKSP. 2 disordered regions span residues 68–97 and 141–164; these read EKKK…TPRN and MDVQ…RPAS. Positions 144–157 are enriched in polar residues; it reads QSPSTMSTSKNNVR.

It localises to the mitochondrion. This is an uncharacterized protein from Schizosaccharomyces pombe (strain 972 / ATCC 24843) (Fission yeast).